Reading from the N-terminus, the 221-residue chain is 3-isopropylmalate dehydratase small subunit (221 aa).

It belongs to the LeuD family. LeuD type 1 subfamily. Heterodimer of LeuC and LeuD.

It catalyses the reaction (2R,3S)-3-isopropylmalate = (2S)-2-isopropylmalate. It functions in the pathway amino-acid biosynthesis; L-leucine biosynthesis; L-leucine from 3-methyl-2-oxobutanoate: step 2/4. Its function is as follows. Catalyzes the isomerization between 2-isopropylmalate and 3-isopropylmalate, via the formation of 2-isopropylmaleate. The protein is 3-isopropylmalate dehydratase small subunit of Nitrosomonas europaea (strain ATCC 19718 / CIP 103999 / KCTC 2705 / NBRC 14298).